The chain runs to 68 residues: Large ribosomal subunit protein bL32 (68 aa).

The tract at residues 1 to 21 (MAVQQNKVSKSRRNNRRAHDS) is disordered.

This sequence belongs to the bacterial ribosomal protein bL32 family.

The sequence is that of Large ribosomal subunit protein bL32 from Roseobacter denitrificans (strain ATCC 33942 / OCh 114) (Erythrobacter sp. (strain OCh 114)).